A 490-amino-acid polypeptide reads, in one-letter code: Transmembrane protease serine 2 (490 aa).

Topologically, residues 1-83 (MALNSGSPPG…ALCTSKSKKS (83 aa)) are cytoplasmic. Residues 84–104 (LCLALALGTVLTGAAVAAVLL) traverse the membrane as a helical; Signal-anchor for type II membrane protein segment. The Extracellular portion of the chain corresponds to 105–490 (WRFWDSNCST…WIYQQMRANS (386 aa)). Residue N111 is glycosylated (N-linked (GlcNAc...) asparagine). The LDL-receptor class A domain maps to 111 to 149 (NCSTSEMECGSSGTCISSSLWCDGVAHCPNGEDENRCVR). 9 cysteine pairs are disulfide-bonded: C112-C125, C119-C138, C132-C147, C171-C230, C184-C240, C243-C363, C279-C295, C408-C424, and C435-C463. The Ca(2+) site is built by D133, V135, D143, and E144. In terms of domain architecture, SRCR spans 150–242 (LYGQSFILQV…RMVVSLRCIE (93 aa)). N-linked (GlcNAc...) asparagine glycosylation occurs at N212. In terms of domain architecture, Peptidase S1 spans 254 to 487 (IVGGLNASPG…FTDWIYQQMR (234 aa)). Catalysis depends on charge relay system residues H294 and D343. Residue S439 is the Charge relay system of the active site. Residue N474 is glycosylated (N-linked (GlcNAc...) asparagine).

This sequence belongs to the peptidase S1 family. The catalytically active form interacts with ACE2. In terms of processing, proteolytically processed; by an autocatalytic mechanism. Autocleavage induces active conformation. In terms of tissue distribution, larynx, trachea and bronchi, lung, prostate and kidney.

It is found in the cell membrane. Its subcellular location is the secreted. The enzyme catalyses The enzyme cleaves angiotensin-converting enzyme 2 (EC 3.4.17.23) and cleaves influenzea A and B virus and coronavirus spike glycoproteins at arginine residues.. Plasma membrane-anchored serine protease that cleaves at arginine residues. Participates in proteolytic cascades of relevance for the normal physiologic function of the prostate. Androgen-induced TMPRSS2 activates several substrates that include pro-hepatocyte growth factor/HGF, the protease activated receptor-2/F2RL1 or matriptase/ST14 leading to extracellular matrix disruption. In addition, activates trigeminal neurons and contribute to both spontaneous pain and mechanical allodynia. In terms of biological role, (Microbial infection) Essential for spread and pathogenesis of influenza A virus (strains H1N1, H3N2 and H7N9) and is involved in proteolytic cleavage and activation of hemagglutinin (HA) protein which is essential for viral infectivity. The protein is Transmembrane protease serine 2 (Tmprss2) of Mus musculus (Mouse).